The following is a 427-amino-acid chain: Adenylosuccinate synthetase (427 aa).

GTP contacts are provided by residues 12–18 (GDEGKGK) and 40–42 (GHT). The active-site Proton acceptor is Asp13. Mg(2+)-binding residues include Asp13 and Gly40. IMP contacts are provided by residues 13-16 (DEGK), 38-41 (NAGH), Thr130, Arg144, Gln224, Thr239, and Arg303. The Proton donor role is filled by His41. 299-305 (SVTGRPR) serves as a coordination point for substrate. GTP contacts are provided by residues Arg305, 331–333 (KLD), and 411–413 (SVG).

Belongs to the adenylosuccinate synthetase family. As to quaternary structure, homodimer. Mg(2+) is required as a cofactor.

It localises to the cytoplasm. The enzyme catalyses IMP + L-aspartate + GTP = N(6)-(1,2-dicarboxyethyl)-AMP + GDP + phosphate + 2 H(+). Its pathway is purine metabolism; AMP biosynthesis via de novo pathway; AMP from IMP: step 1/2. Functionally, plays an important role in the de novo pathway of purine nucleotide biosynthesis. Catalyzes the first committed step in the biosynthesis of AMP from IMP. This is Adenylosuccinate synthetase from Sorangium cellulosum (strain So ce56) (Polyangium cellulosum (strain So ce56)).